The sequence spans 666 residues: MDIKEKIEELRAELHRHNYNYYVLNAPEISDKEFDDKMRELQDLELAHPEYKDENSPTMRVGSDINKNFTQVAHKYPMLSLANTYSEGEVTDFYERVRKALNEDFEICCEMKYDGTSISLTYEDGKLVRAVTRGDGEKGDDVTDNVKTIRSIPLVLHGDNYPSSFEIRGEILMPWEVFEELNREKEAREEPLFANPRNAASGTLKLQNSSIVASRKLDAYLYYLLGDNLPCDGHYENLQEAAKWGFKISDLTRKCQTLEEVFEFINYWDVERKNLPVATDGIVLKVNSLRQQKNLGFTAKSPRWAIAYKFQAERALTRLNMVTYQVGRTGAVTPVANLDAVQLSGTVVKRASLHNADIIEGLDLHIGDMVYVEKGGEIIPKITGVDKDARSFMLGEKVRFITNCPECGSKLIRYEGEAAHYCPNETACPPQIKGKIEHFISRKAMNIDGLGPETVDMFYRLGLIHNTADLYELKADDIKGLDRMGEKSAENIITGIEQSKTVPFERVIFALGIRFVGETVAKKIAKSFGDIDELRQADLEKLISIDEIGEKIARSILLYFSNESNRELVGRLKEAGLQLYRTEEDMSGYTDKLAGQSIVISGVFTHHSRDEYKDLIEKNGGKNVGSISAKTSFILAGDNMGPAKLEKAKKLGVTILSEDEFLKLIS.

Residues 31-35 (DKEFD), 80-81 (SL), and E110 contribute to the NAD(+) site. K112 serves as the catalytic N6-AMP-lysine intermediate. Positions 133, 170, 285, and 309 each coordinate NAD(+). Positions 404, 407, 422, and 428 each coordinate Zn(2+). The BRCT domain maps to 588 to 666 (GYTDKLAGQS…SEDEFLKLIS (79 aa)).

This sequence belongs to the NAD-dependent DNA ligase family. LigA subfamily. Mg(2+) is required as a cofactor. Mn(2+) serves as cofactor.

The catalysed reaction is NAD(+) + (deoxyribonucleotide)n-3'-hydroxyl + 5'-phospho-(deoxyribonucleotide)m = (deoxyribonucleotide)n+m + AMP + beta-nicotinamide D-nucleotide.. In terms of biological role, DNA ligase that catalyzes the formation of phosphodiester linkages between 5'-phosphoryl and 3'-hydroxyl groups in double-stranded DNA using NAD as a coenzyme and as the energy source for the reaction. It is essential for DNA replication and repair of damaged DNA. This Bacteroides thetaiotaomicron (strain ATCC 29148 / DSM 2079 / JCM 5827 / CCUG 10774 / NCTC 10582 / VPI-5482 / E50) protein is DNA ligase.